Consider the following 476-residue polypeptide: Aspartyl/glutamyl-tRNA(Asn/Gln) amidotransferase subunit B (476 aa).

This sequence belongs to the GatB/GatE family. GatB subfamily. As to quaternary structure, heterotrimer of A, B and C subunits.

The enzyme catalyses L-glutamyl-tRNA(Gln) + L-glutamine + ATP + H2O = L-glutaminyl-tRNA(Gln) + L-glutamate + ADP + phosphate + H(+). It catalyses the reaction L-aspartyl-tRNA(Asn) + L-glutamine + ATP + H2O = L-asparaginyl-tRNA(Asn) + L-glutamate + ADP + phosphate + 2 H(+). Allows the formation of correctly charged Asn-tRNA(Asn) or Gln-tRNA(Gln) through the transamidation of misacylated Asp-tRNA(Asn) or Glu-tRNA(Gln) in organisms which lack either or both of asparaginyl-tRNA or glutaminyl-tRNA synthetases. The reaction takes place in the presence of glutamine and ATP through an activated phospho-Asp-tRNA(Asn) or phospho-Glu-tRNA(Gln). The sequence is that of Aspartyl/glutamyl-tRNA(Asn/Gln) amidotransferase subunit B from Neisseria meningitidis serogroup A / serotype 4A (strain DSM 15465 / Z2491).